The following is a 47-amino-acid chain: Putative heat shock protein HSP90 (47 aa).

Arginine 47 lines the ATP pocket.

The protein belongs to the heat shock protein 90 family. As to quaternary structure, homodimer.

The protein localises to the cytoplasm. In terms of biological role, putative molecular chaperone that may promote the maturation, structural maintenance and proper regulation of specific target proteins. The polypeptide is Putative heat shock protein HSP90 (Populus euphratica (Euphrates poplar)).